Consider the following 401-residue polypeptide: Chorismate synthase (401 aa).

Positions 40 and 46 each coordinate NADP(+). FMN contacts are provided by residues 135-137 (RAS), 256-257 (QA), glycine 300, 315-319 (KPIST), and arginine 341.

The protein belongs to the chorismate synthase family. In terms of assembly, homotetramer. Requires FMNH2 as cofactor.

The enzyme catalyses 5-O-(1-carboxyvinyl)-3-phosphoshikimate = chorismate + phosphate. The protein operates within metabolic intermediate biosynthesis; chorismate biosynthesis; chorismate from D-erythrose 4-phosphate and phosphoenolpyruvate: step 7/7. In terms of biological role, catalyzes the anti-1,4-elimination of the C-3 phosphate and the C-6 proR hydrogen from 5-enolpyruvylshikimate-3-phosphate (EPSP) to yield chorismate, which is the branch point compound that serves as the starting substrate for the three terminal pathways of aromatic amino acid biosynthesis. This reaction introduces a second double bond into the aromatic ring system. This is Chorismate synthase from Mycobacterium bovis (strain BCG / Pasteur 1173P2).